Consider the following 357-residue polypeptide: Peptide chain release factor 1 (357 aa).

Position 232 is an N5-methylglutamine (Gln232).

It belongs to the prokaryotic/mitochondrial release factor family. Post-translationally, methylated by PrmC. Methylation increases the termination efficiency of RF1.

It localises to the cytoplasm. Peptide chain release factor 1 directs the termination of translation in response to the peptide chain termination codons UAG and UAA. The sequence is that of Peptide chain release factor 1 from Maridesulfovibrio salexigens (strain ATCC 14822 / DSM 2638 / NCIMB 8403 / VKM B-1763) (Desulfovibrio salexigens).